A 347-amino-acid chain; its full sequence is GMP reductase (347 aa).

108–131 (TDFEKTKQILIANPALNFLCIDVA) lines the NADP(+) pocket. K(+)-binding residues include glycine 181 and glycine 183. Cysteine 186 (thioimidate intermediate) is an active-site residue. An NADP(+)-binding site is contributed by 216-239 (IISDGGCTMPGDVAKAFGGGADFV).

This sequence belongs to the IMPDH/GMPR family. GuaC type 1 subfamily. As to quaternary structure, homotetramer.

It carries out the reaction IMP + NH4(+) + NADP(+) = GMP + NADPH + 2 H(+). In terms of biological role, catalyzes the irreversible NADPH-dependent deamination of GMP to IMP. It functions in the conversion of nucleobase, nucleoside and nucleotide derivatives of G to A nucleotides, and in maintaining the intracellular balance of A and G nucleotides. This chain is GMP reductase, found in Enterobacter sp. (strain 638).